Here is a 104-residue protein sequence, read N- to C-terminus: UPF0213 protein plu4503 (104 aa).

Residues 4 to 79 (NQWVLYLLKT…KQLSKQQKER (76 aa)) enclose the GIY-YIG domain.

Belongs to the UPF0213 family.

The protein is UPF0213 protein plu4503 of Photorhabdus laumondii subsp. laumondii (strain DSM 15139 / CIP 105565 / TT01) (Photorhabdus luminescens subsp. laumondii).